The chain runs to 330 residues: Serpentine receptor class J-38 (330 aa).

7 helical membrane passes run 6 to 26 (IYIF…PIFV), 43 to 63 (LLLF…VVPI), 98 to 118 (LVAS…LVIY), 135 to 155 (LLLS…LGYA), 200 to 220 (TIIW…LALL), 253 to 273 (IPIV…IFGI), and 285 to 305 (GALG…LPIF).

It belongs to the nematode receptor-like protein srj family.

Its subcellular location is the membrane. This is Serpentine receptor class J-38 (srj-38) from Caenorhabditis elegans.